A 1039-amino-acid chain; its full sequence is Kinesin-like protein KIN-5B (1039 aa).

The region spanning 48 to 390 is the Kinesin motor domain; it reads NVQVILRCKP…LDYAYRAKNI (343 aa). Residue 134 to 141 coordinates ATP; sequence GQTGTGKT. The interval 1008–1039 is disordered; the sequence is TLSEEHTSLEKISTKQGLGEANNRTPFLEVNK. A compositionally biased stretch (basic and acidic residues) spans 1010 to 1020; the sequence is SEEHTSLEKIS.

Belongs to the TRAFAC class myosin-kinesin ATPase superfamily. Kinesin family. KIN-5/BimC subfamily.

Its subcellular location is the cytoplasm. The protein localises to the cytoskeleton. The protein resides in the spindle. Functionally, responsible for microtubule translocation. May be important for the organization of phragmoplast-specific arrays of microtubules. Plays an essential role in stabilizing the mitotic spindle. Required during mitotic cytokinesis. In Arabidopsis thaliana (Mouse-ear cress), this protein is Kinesin-like protein KIN-5B.